A 733-amino-acid chain; its full sequence is Methionine--tRNA ligase (733 aa).

Positions 11-21 match the 'HIGH' region motif; it reads PYANGPIHAGH. Cysteine 143, cysteine 146, cysteine 156, and cysteine 159 together coordinate Zn(2+). Residues 345–349 carry the 'KMSKS' region motif; the sequence is KFSTS. Threonine 348 provides a ligand contact to ATP. One can recognise a tRNA-binding domain in the interval 633–733; that stretch reads DFMKLDLRVG…KEVKLGARIR (101 aa).

This sequence belongs to the class-I aminoacyl-tRNA synthetase family. MetG type 1 subfamily. In terms of assembly, homodimer. Zn(2+) is required as a cofactor.

The protein resides in the cytoplasm. The enzyme catalyses tRNA(Met) + L-methionine + ATP = L-methionyl-tRNA(Met) + AMP + diphosphate. In terms of biological role, is required not only for elongation of protein synthesis but also for the initiation of all mRNA translation through initiator tRNA(fMet) aminoacylation. This chain is Methionine--tRNA ligase, found in Thermococcus onnurineus (strain NA1).